Here is a 461-residue protein sequence, read N- to C-terminus: D-phenylhydantoinase (461 aa).

A divalent metal cation is bound by residues His59, His61, and Lys151. Residue Lys151 is modified to N6-carboxylysine. A substrate-binding site is contributed by Tyr156. 2 residues coordinate a divalent metal cation: His182 and His239. Ser286 is a binding site for substrate. Asp313 serves as a coordination point for a divalent metal cation. Asn335 is a binding site for substrate.

Belongs to the metallo-dependent hydrolases superfamily. Hydantoinase/dihydropyrimidinase family. Homotetramer. Requires a divalent metal cation as cofactor. Post-translationally, carboxylation allows a single lysine to coordinate two divalent metal cations.

It carries out the reaction D-5-phenylhydantoin + H2O = N-carbamoyl-D-phenylglycine + H(+). Functionally, catalyzes the stereospecific hydrolysis of the cyclic amide bond of D-hydantoin derivatives with an aromatic side chains at the 5'-position. Has no activity on dihydropyrimidines. The physiological function is unknown. The chain is D-phenylhydantoinase from Escherichia coli O17:K52:H18 (strain UMN026 / ExPEC).